Reading from the N-terminus, the 259-residue chain is Expansin-B6 (259 aa).

The N-terminal stretch at 1–24 is a signal peptide; the sequence is MASSSHRYFALLALFAVSLKFCYC. Asn-26 carries an N-linked (GlcNAc...) asparagine glycan. One can recognise an Expansin-like EG45 domain in the interval 52–160; the sequence is GGACGFAVAN…IRVECLYRRT (109 aa). Cystine bridges form between Cys-55/Cys-82, Cys-85/Cys-155, and Cys-90/Cys-96. The Expansin-like CBD domain occupies 173-254; that stretch reads YYISFVVEYE…NWKPNETYRS (82 aa). A glycan (N-linked (GlcNAc...) asparagine) is linked at Asn-249.

The protein belongs to the expansin family. Expansin B subfamily.

Its subcellular location is the secreted. The protein resides in the cell wall. It is found in the membrane. Functionally, may cause loosening and extension of plant cell walls by disrupting non-covalent bonding between cellulose microfibrils and matrix glucans. This chain is Expansin-B6, found in Arabidopsis thaliana (Mouse-ear cress).